Here is a 232-residue protein sequence, read N- to C-terminus: 5'-methylthioadenosine/S-adenosylhomocysteine nucleosidase (232 aa).

The active-site Proton acceptor is the glutamate 12. Substrate-binding positions include glycine 78, isoleucine 152, and 173–174; that span reads ME. The active-site Proton donor is the aspartate 197.

It belongs to the PNP/UDP phosphorylase family. MtnN subfamily. In terms of assembly, homodimer.

The catalysed reaction is S-adenosyl-L-homocysteine + H2O = S-(5-deoxy-D-ribos-5-yl)-L-homocysteine + adenine. The enzyme catalyses S-methyl-5'-thioadenosine + H2O = 5-(methylsulfanyl)-D-ribose + adenine. It carries out the reaction 5'-deoxyadenosine + H2O = 5-deoxy-D-ribose + adenine. Its pathway is amino-acid biosynthesis; L-methionine biosynthesis via salvage pathway; S-methyl-5-thio-alpha-D-ribose 1-phosphate from S-methyl-5'-thioadenosine (hydrolase route): step 1/2. Functionally, catalyzes the irreversible cleavage of the glycosidic bond in both 5'-methylthioadenosine (MTA) and S-adenosylhomocysteine (SAH/AdoHcy) to adenine and the corresponding thioribose, 5'-methylthioribose and S-ribosylhomocysteine, respectively. Also cleaves 5'-deoxyadenosine, a toxic by-product of radical S-adenosylmethionine (SAM) enzymes, into 5-deoxyribose and adenine. Thus, is required for in vivo function of the radical SAM enzymes biotin synthase and lipoic acid synthase, that are inhibited by 5'-deoxyadenosine accumulation. This Cronobacter sakazakii (strain ATCC BAA-894) (Enterobacter sakazakii) protein is 5'-methylthioadenosine/S-adenosylhomocysteine nucleosidase.